We begin with the raw amino-acid sequence, 179 residues long: Probable chorismate pyruvate-lyase (179 aa).

3 residues coordinate substrate: Arg-82, Leu-120, and Glu-165.

This sequence belongs to the UbiC family.

It is found in the cytoplasm. It catalyses the reaction chorismate = 4-hydroxybenzoate + pyruvate. It participates in cofactor biosynthesis; ubiquinone biosynthesis. Removes the pyruvyl group from chorismate, with concomitant aromatization of the ring, to provide 4-hydroxybenzoate (4HB) for the ubiquinone pathway. This is Probable chorismate pyruvate-lyase from Vibrio vulnificus (strain YJ016).